Here is a 384-residue protein sequence, read N- to C-terminus: Homoserine O-succinyltransferase (384 aa).

The region spanning 51-361 is the AB hydrolase-1 domain; the sequence is NAILICHALS…ETSQGHDAFL (311 aa). Residue Ser-157 is the Nucleophile of the active site. Arg-227 contacts substrate. Catalysis depends on residues Asp-324 and His-357. Residue Asp-358 coordinates substrate.

This sequence belongs to the AB hydrolase superfamily. MetX family. In terms of assembly, homodimer.

Its subcellular location is the cytoplasm. It catalyses the reaction L-homoserine + succinyl-CoA = O-succinyl-L-homoserine + CoA. The protein operates within amino-acid biosynthesis; L-methionine biosynthesis via de novo pathway; O-succinyl-L-homoserine from L-homoserine: step 1/1. Transfers a succinyl group from succinyl-CoA to L-homoserine, forming succinyl-L-homoserine. This is Homoserine O-succinyltransferase from Alkalilimnicola ehrlichii (strain ATCC BAA-1101 / DSM 17681 / MLHE-1).